We begin with the raw amino-acid sequence, 81 residues long: Large ribosomal subunit protein eL31 (81 aa).

It belongs to the eukaryotic ribosomal protein eL31 family.

The polypeptide is Large ribosomal subunit protein eL31 (rpl31e) (Methanothermobacter thermautotrophicus (strain ATCC 29096 / DSM 1053 / JCM 10044 / NBRC 100330 / Delta H) (Methanobacterium thermoautotrophicum)).